A 108-amino-acid polypeptide reads, in one-letter code: Ig kappa chain V-V region MOPC 173 (108 aa).

The tract at residues 1-23 is framework-1; that stretch reads DIQMTQTTSSLSASLGDRVTISC. Residues C23 and C88 are joined by a disulfide bond. The complementarity-determining-1 stretch occupies residues 24–34; the sequence is SASQSIGNYLB. The tract at residues 35–49 is framework-2; that stretch reads WYQQKPDGTVKLLIY. The tract at residues 50 to 56 is complementarity-determining-2; the sequence is YTSSLHS. The interval 57–88 is framework-3; the sequence is GVPSRFSGSGSGTDYSLTISBLZPZBIATYYC. The complementarity-determining-3 stretch occupies residues 89 to 97; the sequence is QQYSKLPRT. Positions 98–108 are framework-4; the sequence is FGGGTKLEIKR.

This Mus musculus (Mouse) protein is Ig kappa chain V-V region MOPC 173.